The chain runs to 77 residues: U8-lycotoxin-Ls1m (77 aa).

The N-terminal stretch at 1–20 (MKLMIFTGLVLFAIVSLIEA) is a signal peptide. The propeptide occupies 21 to 26 (QAENEK).

The protein belongs to the neurotoxin 19 (CSTX) family. 08 (U8-Lctx) subfamily. Post-translationally, contains 4 disulfide bonds. In terms of tissue distribution, expressed by the venom gland.

The protein resides in the secreted. The chain is U8-lycotoxin-Ls1m from Lycosa singoriensis (Wolf spider).